We begin with the raw amino-acid sequence, 372 residues long: Protein REVEILLE 7 (372 aa).

An HTH myb-type domain is found at 71–125; that stretch reads TVTKQREKWSEEEHDRFLEAIKLYGRGWRQIQEHIGTKTAVQIRSHAQKFFSKMA. The H-T-H motif DNA-binding region spans 98–121; that stretch reads WRQIQEHIGTKTAVQIRSHAQKFF. Residues 124-204 are disordered; it reads MAQEADSRSE…RCSSPNSCTS (81 aa). A compositionally biased stretch (basic residues) spans 145-155; that stretch reads RPKRKPAHPYP. Pro residues predominate over residues 156–169; the sequence is RKSPVPYTQSPPPN. Over residues 178–204 the composition is skewed to polar residues; the sequence is KSPTSVLSSFGSEDQVNRCSSPNSCTS.

Its subcellular location is the nucleus. In terms of biological role, transcription factor involved in phytochrome A-mediated cotyledon opening. Controlled by the central oscillator mediated by LHY and CCA1. Part of a regulatory circadian feedback loop. Regulates its own expression. The sequence is that of Protein REVEILLE 7 (RVE7) from Arabidopsis thaliana (Mouse-ear cress).